A 239-amino-acid chain; its full sequence is Ribosomal RNA small subunit methyltransferase G (239 aa).

Residues glycine 76, phenylalanine 81, 99 to 101 (DSS), 128 to 129 (IE), and arginine 147 each bind S-adenosyl-L-methionine.

This sequence belongs to the methyltransferase superfamily. RNA methyltransferase RsmG family.

The protein localises to the cytoplasm. Specifically methylates the N7 position of a guanine in 16S rRNA. This is Ribosomal RNA small subunit methyltransferase G from Prochlorococcus marinus subsp. pastoris (strain CCMP1986 / NIES-2087 / MED4).